Here is a 325-residue protein sequence, read N- to C-terminus: Hydroxymethylglutaryl-CoA lyase, mitochondrial (325 aa).

Residues 1-27 (MATVRKAFPQRLVGLASLRAASTSSMG) constitute a mitochondrion transit peptide. Residues 33-300 (VKIVEVGPRD…HTGVNLQKLL (268 aa)) enclose the Pyruvate carboxyltransferase domain. Position 41 (Arg-41) interacts with substrate. Asp-42 is an a divalent metal cation binding site. N6-acetyllysine; alternate is present on Lys-48. An N6-succinyllysine; alternate modification is found at Lys-48. Position 111 is an N6-acetyllysine (Lys-111). 2 positions are modified to N6-acetyllysine; alternate: Lys-137 and Lys-179. An N6-succinyllysine; alternate mark is found at Lys-137 and Lys-179. A divalent metal cation is bound by residues His-233 and His-235. Residue Cys-266 is part of the active site. Asn-275 is an a divalent metal cation binding site. Residues 323–325 (CKL) carry the Microbody targeting signal motif. Lys-324 is modified (N6-acetyllysine).

It belongs to the HMG-CoA lyase family. Homodimer; disulfide-linked. Can also form homotetramers. In terms of tissue distribution, in suckling rat, highest levels in liver and in intestine. Lower levels in heart, kidney and cerebellum. Weak expression in brain cortex, medulla and midbrain. Levels decrease slightly during weaning.

Its subcellular location is the mitochondrion matrix. It is found in the peroxisome. It catalyses the reaction (3S)-3-hydroxy-3-methylglutaryl-CoA = acetoacetate + acetyl-CoA. It participates in metabolic intermediate metabolism; (S)-3-hydroxy-3-methylglutaryl-CoA degradation; acetoacetate from (S)-3-hydroxy-3-methylglutaryl-CoA: step 1/1. Its function is as follows. Mitochondrial 3-hydroxy-3-methylglutaryl-CoA lyase that catalyzes a cation-dependent cleavage of (S)-3-hydroxy-3-methylglutaryl-CoA into acetyl-CoA and acetoacetate, a key step in ketogenesis. Terminal step in leucine catabolism. Ketone bodies (beta-hydroxybutyrate, acetoacetate and acetone) are essential as an alternative source of energy to glucose, as lipid precursors and as regulators of metabolism. The chain is Hydroxymethylglutaryl-CoA lyase, mitochondrial (Hmgcl) from Rattus norvegicus (Rat).